The following is a 387-amino-acid chain: Phosphoglycerate kinase (387 aa).

Substrate contacts are provided by residues 21–23 (DLN), R36, 59–62 (HLGR), R113, and R146. ATP is bound by residues K197, E314, and 340 to 343 (GGDT).

The protein belongs to the phosphoglycerate kinase family. Monomer.

It is found in the cytoplasm. It catalyses the reaction (2R)-3-phosphoglycerate + ATP = (2R)-3-phospho-glyceroyl phosphate + ADP. It participates in carbohydrate degradation; glycolysis; pyruvate from D-glyceraldehyde 3-phosphate: step 2/5. The chain is Phosphoglycerate kinase from Aliivibrio fischeri (strain MJ11) (Vibrio fischeri).